Consider the following 382-residue polypeptide: Bifunctional enzyme IspD/IspF (382 aa).

Residues 1–225 (MTGKPSIAAL…AEERMAMISR (225 aa)) form a 2-C-methyl-D-erythritol 4-phosphate cytidylyltransferase region. The interval 225–382 (RTAMGFDVHG…AVATVRVPSI (158 aa)) is 2-C-methyl-D-erythritol 2,4-cyclodiphosphate synthase. Residues Asp-231 and His-233 each contribute to the a divalent metal cation site. 4-CDP-2-C-methyl-D-erythritol 2-phosphate contacts are provided by residues 231 to 233 (DVH) and 257 to 258 (HS). His-265 contributes to the a divalent metal cation binding site. 4-CDP-2-C-methyl-D-erythritol 2-phosphate is bound by residues 279-281 (DIG), 355-358 (TTTE), Phe-362, and Arg-365.

The protein in the N-terminal section; belongs to the IspD/TarI cytidylyltransferase family. IspD subfamily. It in the C-terminal section; belongs to the IspF family. It depends on a divalent metal cation as a cofactor.

It carries out the reaction 2-C-methyl-D-erythritol 4-phosphate + CTP + H(+) = 4-CDP-2-C-methyl-D-erythritol + diphosphate. The catalysed reaction is 4-CDP-2-C-methyl-D-erythritol 2-phosphate = 2-C-methyl-D-erythritol 2,4-cyclic diphosphate + CMP. The protein operates within isoprenoid biosynthesis; isopentenyl diphosphate biosynthesis via DXP pathway; isopentenyl diphosphate from 1-deoxy-D-xylulose 5-phosphate: step 2/6. It functions in the pathway isoprenoid biosynthesis; isopentenyl diphosphate biosynthesis via DXP pathway; isopentenyl diphosphate from 1-deoxy-D-xylulose 5-phosphate: step 4/6. Its function is as follows. Bifunctional enzyme that catalyzes the formation of 4-diphosphocytidyl-2-C-methyl-D-erythritol from CTP and 2-C-methyl-D-erythritol 4-phosphate (MEP) (IspD), and catalyzes the conversion of 4-diphosphocytidyl-2-C-methyl-D-erythritol 2-phosphate (CDP-ME2P) to 2-C-methyl-D-erythritol 2,4-cyclodiphosphate (ME-CPP) with a corresponding release of cytidine 5-monophosphate (CMP) (IspF). The sequence is that of Bifunctional enzyme IspD/IspF from Rhizorhabdus wittichii (strain DSM 6014 / CCUG 31198 / JCM 15750 / NBRC 105917 / EY 4224 / RW1) (Sphingomonas wittichii).